The sequence spans 378 residues: Dual-specificity RNA methyltransferase RlmN (378 aa).

Glu97 (proton acceptor) is an active-site residue. A Radical SAM core domain is found at 103-341; the sequence is EGDRATLCVS…VMVRKTRGDD (239 aa). The cysteines at positions 110 and 346 are disulfide-linked. Residues Cys117, Cys121, and Cys124 each contribute to the [4Fe-4S] cluster site. Residues 171–172, Ser203, 225–227, and Asn303 contribute to the S-adenosyl-L-methionine site; these read GE and SLH. The S-methylcysteine intermediate role is filled by Cys346.

Belongs to the radical SAM superfamily. RlmN family. [4Fe-4S] cluster serves as cofactor.

The protein resides in the cytoplasm. The enzyme catalyses adenosine(2503) in 23S rRNA + 2 reduced [2Fe-2S]-[ferredoxin] + 2 S-adenosyl-L-methionine = 2-methyladenosine(2503) in 23S rRNA + 5'-deoxyadenosine + L-methionine + 2 oxidized [2Fe-2S]-[ferredoxin] + S-adenosyl-L-homocysteine. It carries out the reaction adenosine(37) in tRNA + 2 reduced [2Fe-2S]-[ferredoxin] + 2 S-adenosyl-L-methionine = 2-methyladenosine(37) in tRNA + 5'-deoxyadenosine + L-methionine + 2 oxidized [2Fe-2S]-[ferredoxin] + S-adenosyl-L-homocysteine. In terms of biological role, specifically methylates position 2 of adenine 2503 in 23S rRNA and position 2 of adenine 37 in tRNAs. m2A2503 modification seems to play a crucial role in the proofreading step occurring at the peptidyl transferase center and thus would serve to optimize ribosomal fidelity. The chain is Dual-specificity RNA methyltransferase RlmN from Idiomarina loihiensis (strain ATCC BAA-735 / DSM 15497 / L2-TR).